Reading from the N-terminus, the 962-residue chain is Voltage-gated delayed rectifier potassium channel KCNH1 (962 aa).

Topologically, residues 1–220 are cytoplasmic; the sequence is MTMAGGRRGL…LHYCVFKTTW (220 aa). In terms of domain architecture, PAS spans 14–94; the sequence is QNTFLENIVR…QTFENYEMNS (81 aa). Positions 93–145 constitute a PAC domain; that stretch reads NSFEILMYKKNRTPVWFFVKIAPIRNEQDKVVLFLCTFSDITAFKQPIEDDSC. Residues 151-162 form a required for phosphatidylinositol bisphosphate binding region; the sequence is FARLTRALTSSR. Residues 221–241 traverse the membrane as a helical segment; sequence DWIILILTFYTAILVPYNVSF. Topologically, residues 242-248 are extracellular; the sequence is KTRQNNV. The helical transmembrane segment at 249 to 269 threads the bilayer; that stretch reads AWLVVDSIVDVIFLVDIVLNF. Residues 270–290 are Cytoplasmic-facing; sequence HTTFVGPAGEVISDPKLIRMN. A helical membrane pass occupies residues 291-309; the sequence is YLKTWFVIDLLSCLPYDVI. The Extracellular portion of the chain corresponds to 310–318; the sequence is NAFENVDEG. A helical; Voltage-sensor transmembrane segment spans residues 319-341; the sequence is ISSLFSSLKVVRLLRLGRVARKL. Residues 342 to 350 lie on the Cytoplasmic side of the membrane; it reads DHYIEYGAA. Residues 351 to 372 traverse the membrane as a helical segment; sequence VLVLLVCVFGLAAHWMACIWYS. The Extracellular portion of the chain corresponds to 373 to 421; it reads IGDYEIFDEDTKTIRNNSWLYQLALDIGTPYQFNGSGSGKWEGGPSKNS. N-linked (GlcNAc...) asparagine glycans are attached at residues N388 and N406. The segment at residues 422–443 is an intramembrane region (pore-forming); that stretch reads VYISSLYFTMTSLTSVGFGNIA. Residues 436–441 carry the Selectivity filter motif; sequence SVGFGN. At 444–450 the chain is on the extracellular side; sequence PSTDIEK. Residues 451–471 traverse the membrane as a helical segment; it reads IFAVAIMMIGSLLYATIFGNV. The Cytoplasmic segment spans residues 472–962; sequence TTIFQQMYAN…ESDRDIFGAS (491 aa). Positions 646–743 are calmodulin-binding; that stretch reads KRDALQKVLE…LDDLDVEKGN (98 aa). The tract at residues 672–674 is interaction with cyclic nucleotide-binding pocket; sequence YNL. Positions 830–852 are enriched in basic and acidic residues; sequence ESMETLPERTKASGEATLKKTDS. Disordered stretches follow at residues 830-859 and 933-962; these read ESMETLPERTKASGEATLKKTDSCDSGITK and SRGSSQSPQDTCEVSRPQSPESDRDIFGAS. Residues 897 to 937 form a CAD (involved in subunit assembly) region; that stretch reads ATVLEVKHELKEDIKALNAKMTSIEKQLSEILRILMSRGSS. Over residues 934-952 the composition is skewed to polar residues; that stretch reads RGSSQSPQDTCEVSRPQSP. Phosphoserine occurs at positions 947, 951, and 954. Basic and acidic residues predominate over residues 953–962; the sequence is ESDRDIFGAS.

The protein belongs to the potassium channel family. H (Eag) (TC 1.A.1.20) subfamily. Kv10.1/KCNH1 sub-subfamily. As to quaternary structure, homomultimer. The potassium channel is composed of a homo- or heterotetrameric complex of pore-forming alpha subunits that can associate with modulating beta subunits. Heteromultimer with KCNH5/EAG2. Interacts with ALG10B. Interacts with RABEP1. Interacts (via C-terminus) with CTTN. Interacts (via cytoplasmic region) with Ca(2+)-bound calmodulin. Channel activity is regulated via tyrosine phosphorylation/dephosphorylation by SRC and PTPN6. Detected in cerebellum, at parallel fiber synapses on Purkinje cell spines. Detected in hippocampus neurons (at protein level). Detected in brain, but not in the other tissues tested; expression is highest in granular cells of the dentate gyrus, in hippocampus CA3 pyramidal cells, and in cerebellar granule cells. Detected in pituitary.

Its subcellular location is the cell membrane. It is found in the nucleus inner membrane. It localises to the cell projection. The protein resides in the dendrite. The protein localises to the axon. Its subcellular location is the presynaptic cell membrane. It is found in the perikaryon. It localises to the postsynaptic density membrane. The protein resides in the early endosome membrane. The catalysed reaction is K(+)(in) = K(+)(out). Channel activity is inhibited by interaction with Ca(2+)-bound calmodulin. Interaction of a single pore-forming alpha subunit with a calmodulin chain is sufficient to promote channel closure. Channel activity is not regulated by cyclic nucleotides. Channel activity is inhibited by binding intracellular phosphatidylinositol-3,5-bisphosphate and phosphatidylinositol-4,5-bisphosphate (PIP2), but is not inhibited by phosphatidylinositol 4-phosphate. Its function is as follows. Pore-forming (alpha) subunit of a voltage-gated delayed rectifier potassium channel that mediates outward-rectifying potassium currents which, on depolarization, reaches a steady-state level and do not inactivate. The activation kinetics depend on the prepulse potential and external divalent cation concentration. With negative prepulses, the current activation is delayed and slowed down several fold, whereas more positive prepulses speed up activation. The time course of activation is biphasic with a fast and a slowly activating current component. Activates at more positive membrane potentials and exhibit a steeper activation curve. Channel properties are modulated by subunit assembly. Mediates IK(NI) current in myoblasts. Involved in the regulation of cell proliferation and differentiation, in particular adipogenic and osteogenic differentiation in bone marrow-derived mesenchymal stem cells (MSCs). This chain is Voltage-gated delayed rectifier potassium channel KCNH1, found in Rattus norvegicus (Rat).